Consider the following 437-residue polypeptide: Aminopeptidase G (437 aa).

Catalysis depends on residues Cys70, His361, and Asn382.

This sequence belongs to the peptidase C1 family.

Its subcellular location is the cytoplasm. This Lactobacillus delbrueckii subsp. lactis protein is Aminopeptidase G (pepG).